A 929-amino-acid polypeptide reads, in one-letter code: Isoleucine--tRNA ligase (929 aa).

The short motif at 57-67 (PYANGNIHVGH) is the 'HIGH' region element. E554 is a binding site for L-isoleucyl-5'-AMP. The 'KMSKS' region motif lies at 595–599 (KMSKS). K598 contacts ATP. Zn(2+)-binding residues include C888, C891, C908, and C911.

Belongs to the class-I aminoacyl-tRNA synthetase family. IleS type 1 subfamily. Monomer. Zn(2+) is required as a cofactor.

The protein resides in the cytoplasm. It carries out the reaction tRNA(Ile) + L-isoleucine + ATP = L-isoleucyl-tRNA(Ile) + AMP + diphosphate. Its function is as follows. Catalyzes the attachment of isoleucine to tRNA(Ile). As IleRS can inadvertently accommodate and process structurally similar amino acids such as valine, to avoid such errors it has two additional distinct tRNA(Ile)-dependent editing activities. One activity is designated as 'pretransfer' editing and involves the hydrolysis of activated Val-AMP. The other activity is designated 'posttransfer' editing and involves deacylation of mischarged Val-tRNA(Ile). This chain is Isoleucine--tRNA ligase, found in Streptococcus thermophilus (strain ATCC BAA-491 / LMD-9).